The sequence spans 1419 residues: L-2-aminoadipate reductase (1419 aa).

One can recognise a Carrier domain in the interval 880–956 (ETLTATERDI…GLAKEIERMK (77 aa)). At S916 the chain carries O-(pantetheine 4'-phosphoryl)serine.

Belongs to the ATP-dependent AMP-binding enzyme family. The cofactor is pantetheine 4'-phosphate.

It localises to the cytoplasm. It carries out the reaction (S)-2-amino-6-oxohexanoate + NADP(+) + H2O = L-2-aminoadipate + NADPH + 2 H(+). The enzyme catalyses (S)-2-amino-6-oxohexanoate + NAD(+) + H2O = L-2-aminoadipate + NADH + 2 H(+). It catalyses the reaction (S)-2-amino-6-oxohexanoate + AMP + diphosphate + NADP(+) = L-2-aminoadipate + ATP + NADPH + H(+). It functions in the pathway amino-acid biosynthesis; L-lysine biosynthesis via AAA pathway; L-lysine from L-alpha-aminoadipate (fungal route): step 1/3. Functionally, catalyzes the activation of alpha-aminoadipate by ATP-dependent adenylation and the reduction of activated alpha-aminoadipate by NADPH. The activated alpha-aminoadipate is bound to the phosphopantheinyl group of the enzyme itself before it is reduced to (S)-2-amino-6-oxohexanoate. The protein is L-2-aminoadipate reductase (lys1) of Schizosaccharomyces pombe (strain 972 / ATCC 24843) (Fission yeast).